The primary structure comprises 255 residues: Ribosomal RNA small subunit methyltransferase G (255 aa).

S-adenosyl-L-methionine-binding positions include Gly-89, Phe-94, 112–114 (DST), 140–141 (VE), and Arg-159.

It belongs to the methyltransferase superfamily. RNA methyltransferase RsmG family.

The protein resides in the cytoplasm. In terms of biological role, specifically methylates the N7 position of a guanine in 16S rRNA. The chain is Ribosomal RNA small subunit methyltransferase G from Trichodesmium erythraeum (strain IMS101).